The primary structure comprises 1088 residues: DNA damage-binding protein 1b (1088 aa).

This sequence belongs to the DDB1 family. In terms of assembly, interacts with DDA1. Binds to KTN80.2/DWA3. Interacts with HTD1.

The protein resides in the nucleus. It participates in protein modification; protein ubiquitination. In terms of biological role, component of light signal transduction machinery. Involved in repression of photomorphogenesis in darkness. Plays a role in DNA repair by forming with DDB2 the UV-damaged DNA-binding protein complex (UV-DDB). In Arabidopsis thaliana (Mouse-ear cress), this protein is DNA damage-binding protein 1b.